A 641-amino-acid polypeptide reads, in one-letter code: MSDEGPGTGPGNGLGQKEDSSGPEGSGGSGPQRRGGDNHGRGRGRGRGRGGGRPGAPGGSGSGPRHRDGVRRPQKRPSCIGCKGAHGGTGSGAGAGGAGAGGAGAGGGAGAGGGAGGAGGAGGAGAGGGAGAGGGAGGAGGAGAGGGAGAGGGAGGAGAGGGAGGAGGAGAGGGAGAGGGAGGAGAGGGAGGAGGAGAGGGAGAGGAGGAGGAGAGGAGAGGGAGGAGGAGAGGAGAGGAGAGGAGAGGAGGAGAGGAGGAGAGGAGGAGAGEEAGGAGAGGGAGGAGAGGAGGAGAGGAGGAGAGGAGGAGAGGGAGAGGAGAGGGGRGRGGSGGRGRGGSGGRGRGGSGGRRGRGRERARGRSRERARGRGRGRGEKRPRSPSSQSSSSGSPPRRPPPGRRPFFHPVGDADYFEYLQEGGPDGEPDVPPGAIEQGPTDDPGEGPSTGPRGQGDGGRRKKGGWFGKHRGQGGSNPKFENIAEGLRVLLARSHVERTTEEGNWVAGVFVYGGSKTSLYNLRRGIALAVPQCRITPLSRLPFGMAPGPGPQPGPLRESIVCYFMVFLQTHIFAEVLKDAIKDLVMTKPAPTCNIKVTVCSFDDGVDLPPWFPPMVEGAAAEGDDGDDGDEGGDGDEGEEGQE.

A compositionally biased stretch (gly residues) spans 1–14 (MSDEGPGTGPGNGL). 2 disordered regions span residues 1 to 124 (MSDE…AGGA) and 168 to 478 (GAGA…NPKF). Basic residues predominate over residues 41–50 (RGRGRGRGRG). Composition is skewed to gly residues over residues 51–62 (GGRPGAPGGSGS), 84–124 (GAHG…AGGA), and 168–352 (GAGA…GSGG). The interaction with host C1QBP/P32 stretch occupies residues 325–376 (GGGGRGRGGSGGRGRGGSGGRGRGGSGGRRGRGRERARGRSRERARGRGRGR). Positions 328 to 378 (GRGRGGSGGRGRGGSGGRGRGGSGGRRGRGRERARGRSRERARGRGRGRGE) are chromosome-tethering GR2. A compositionally biased stretch (basic and acidic residues) spans 358–381 (RERARGRSRERARGRGRGRGEKRP). Residues 379–386 (KRPRSPSS) form a nuclear localization signal region. Residues 383–394 (SPSSQSSSSGSP) show a composition bias toward low complexity. Ser385 and Ser393 each carry phosphoserine. The interval 387–395 (QSSSSGSPP) is interaction with host CSNK2B. The segment at 436-450 (QGPTDDPGEGPSTGP) is interaction with host USP7. Positions 452–607 (GQGDGGRRKK…CSFDDGVDLP (156 aa)) are DBD/DD. Residues 458 to 470 (RRKKGGWFGKHRG) show a composition bias toward basic residues. Positions 460, 461, and 518 each coordinate DNA. Catalysis depends on Tyr518, which acts as the For site-specific DNA cleavage activity. The tract at residues 612 to 641 (PMVEGAAAEGDDGDDGDEGGDGDEGEEGQE) is disordered. The span at 620-641 (EGDDGDDGDEGGDGDEGEEGQE) shows a compositional bias: acidic residues.

It belongs to the herpesviridae EBNA1 family. In terms of assembly, homodimer. Dimers can assemble into higher-order oligomers like a homohexamer. Binding to the DS element involves 2 dimers of EBNA1. Interacts with human USP7; this interaction is independent and simultaneous to EBNA1 interaction with CSNK2B as well as necessary for PML nuclear bodies disruption by EBNA1. Interacts with host CSNK2B (via KSSR motif); the interaction requires phosphorylation of EBNA1, is independent and simultaneous to EBNA1 interaction with USP7 as well as necessary for PML nuclear bodies disruption by EBNA1. EBNA1, USP7 and CSNK2B form a ternary complex. EBNA1, USP7 and CSNK2B form a ternary complex. Interacts with human EBP2; it is not clear if this interaction is linked with the ability of EBNA1 to associate with host mitotic chromosomes. Interacts with BGLF4; this interaction facilitates the switch from latent to lytic DNA replication by down-regulating EBNA1 replication function. Interacts with human PAX5; this interaction promotes EBNA1-dependent transcription. Interacts with host KPNA1/Importin subunit alpha-5; this interaction allows the nuclear import of EBNA1. Interacts with host KPNA2/Importin subunit alpha-1; this interaction allows the nuclear import of EBNA1. Interacts with host C1QBP/P32. Interacts with host BIRC5/Survivin; this interaction is probably important for EBV episome maintenance in Burkitt's lymphoma host cells. Phosphorylation at Ser-385 increases the nuclear import efficiency of EBNA1. Post-translationally, phosphorylation at Ser-393 is required for interaction with CSNK2B.

It localises to the host nucleus. Responsible for the origin of replication (oriP) dependent replication and maintenance of viral episomes during latent infection. EBNA1 dimer interacts with the DS (dyad symmetry) element within the origin of replication oriP and with a host mitotic chromosome to initiate viral DNA replication during latency. EBNA1 binding to DS recruits the host origin recognition complex (ORC). Governs the faithful mitotic segregation of the viral episomes by binding both the FR (family of repeats) element within oriP and the host mitotic chromosomes. Forms a cell cycle-dependent tyrosine-dependent DNA cross-link and single-strand cleavage at oriP required for terminating replication and maintaining viral episomes. Counteracts the stabilization of host p53/TP53 by host USP7, thereby decreasing apoptosis and increasing host cell survival. Induces degradation of host PML through the ubiquitin-proteasome system, which promotes lytic reactivation and may impair the host cell DNA repair. Increases the association of CK2 with PML proteins which increases the phosphorylation of PML proteins by CK2, triggering the polyubiquitylation and degradation of PML. Displays inhibitory effects on a SUMO2-modified complex that includes STUB1, KAP1 and USP7. This inhibitory effect possibly participates to the maintenance of latency linked to PML silencing. The protein is Epstein-Barr nuclear antigen 1 (EBNA1) of Epstein-Barr virus (strain GD1) (HHV-4).